Here is a 185-residue protein sequence, read N- to C-terminus: Dioxygenase easH (185 aa).

Fe cation is bound by residues His-17, Asp-19, and His-93.

It belongs to the PhyH family. As to quaternary structure, homodimer. Fe cation is required as a cofactor.

Its pathway is alkaloid biosynthesis; ergot alkaloid biosynthesis. Dioxygenase; part of the gene cluster that mediates the biosynthesis of fungal ergot alkaloid ergovaline, the predominant ergopeptine product in E.festucae var. lolii. DmaW catalyzes the first step of ergot alkaloid biosynthesis by condensing dimethylallyl diphosphate (DMAP) and tryptophan to form 4-dimethylallyl-L-tryptophan. The second step is catalyzed by the methyltransferase easF that methylates 4-dimethylallyl-L-tryptophan in the presence of S-adenosyl-L-methionine, resulting in the formation of 4-dimethylallyl-L-abrine. The catalase easC and the FAD-dependent oxidoreductase easE then transform 4-dimethylallyl-L-abrine to chanoclavine-I which is further oxidized by easD in the presence of NAD(+), resulting in the formation of chanoclavine-I aldehyde. Agroclavine dehydrogenase easG then mediates the conversion of chanoclavine-I aldehyde to agroclavine via a non-enzymatic adduct reaction: the substrate is an iminium intermediate that is formed spontaneously from chanoclavine-I aldehyde in the presence of glutathione. The presence of easA is not required to complete this reaction. Further conversion of agroclavine to paspalic acid is a two-step process involving oxidation of agroclavine to elymoclavine and of elymoclavine to paspalic acid, the second step being performed by the elymoclavine oxidase cloA. Paspalic acid is then further converted to D-lysergic acid. Ergovaline is assembled from D-lysergic acid and three different amino acids by the D-lysergyl-peptide-synthetase composed of a monomudular (lpsB) and a trimodular (lpsA) nonribosomal peptide synthetase subunit. In Epichloe festucae var. lolii (Neotyphodium lolii), this protein is Dioxygenase easH.